The sequence spans 291 residues: Tyrosine recombinase XerD (291 aa).

A Core-binding (CB) domain is found at 1–82 (MEEGLIDRLL…ACKRLYIWME (82 aa)). The region spanning 103–285 (NIPTLITEQQ…ANVWLQGVVK (183 aa)) is the Tyr recombinase domain. Active-site residues include Arg-143, Lys-167, His-237, Arg-240, and His-263. Tyr-272 (O-(3'-phospho-DNA)-tyrosine intermediate) is an active-site residue.

This sequence belongs to the 'phage' integrase family. XerD subfamily. Forms a cyclic heterotetrameric complex composed of two molecules of XerC and two molecules of XerD.

Its subcellular location is the cytoplasm. Its function is as follows. Site-specific tyrosine recombinase, which acts by catalyzing the cutting and rejoining of the recombining DNA molecules. The XerC-XerD complex is essential to convert dimers of the bacterial chromosome into monomers to permit their segregation at cell division. It also contributes to the segregational stability of plasmids. This chain is Tyrosine recombinase XerD, found in Neisseria meningitidis serogroup B (strain ATCC BAA-335 / MC58).